A 328-amino-acid chain; its full sequence is tRNA dimethylallyltransferase (328 aa).

10 to 17 (GPTASGKT) lines the ATP pocket. 12 to 17 (TASGKT) provides a ligand contact to substrate.

It belongs to the IPP transferase family. Monomer. Mg(2+) is required as a cofactor.

The catalysed reaction is adenosine(37) in tRNA + dimethylallyl diphosphate = N(6)-dimethylallyladenosine(37) in tRNA + diphosphate. Functionally, catalyzes the transfer of a dimethylallyl group onto the adenine at position 37 in tRNAs that read codons beginning with uridine, leading to the formation of N6-(dimethylallyl)adenosine (i(6)A). The polypeptide is tRNA dimethylallyltransferase (Bifidobacterium longum subsp. infantis (strain ATCC 15697 / DSM 20088 / JCM 1222 / NCTC 11817 / S12)).